Consider the following 944-residue polypeptide: Translation initiation factor IF-2 (944 aa).

Low complexity predominate over residues 55-81 (LTGQAAAPAAAPSSAPRPGARSSAPKP). The segment at 55–329 (LTGQAAAPAA…RTKRAEFELR (275 aa)) is disordered. Over residues 82 to 92 (GGRPTPGPQPT) the composition is skewed to pro residues. Over residues 93-107 (AAPEVEAPEASDVPV) the composition is skewed to low complexity. The segment covering 123–135 (ASRKAAAEEKAQA) has biased composition (basic and acidic residues). Low complexity-rich tracts occupy residues 136 to 153 (EKSA…ETPS) and 211 to 222 (GQRPAAGAAGPR). Over residues 223–236 (PAAPRPGSPRPGAP) the composition is skewed to pro residues. The span at 244 to 257 (GARPAGFGQRPAGA) shows a compositional bias: low complexity. Over residues 258–269 (GRPGGAPGGAGR) the composition is skewed to gly residues. Over residues 270–283 (PGAPAAGGFQRPAG) the composition is skewed to low complexity. Gly residues predominate over residues 284–310 (GFAGRPGGGGRGRGPGGGTAGAFGRGG). A compositionally biased stretch (basic residues) spans 311–322 (GKSKSRKSKRTK). In terms of domain architecture, tr-type G spans 437–611 (IRPPVVTVMG…LTADAGLDLR (175 aa)). Residues 446–453 (GHVDHGKT) are G1. 446–453 (GHVDHGKT) contributes to the GTP binding site. Positions 471-475 (GITQH) are G2. Residues 496-499 (DTPG) are G3. GTP-binding positions include 496-500 (DTPGH) and 550-553 (NKVD). The segment at 550-553 (NKVD) is G4. Residues 586–588 (SAL) are G5.

This sequence belongs to the TRAFAC class translation factor GTPase superfamily. Classic translation factor GTPase family. IF-2 subfamily.

The protein resides in the cytoplasm. Its function is as follows. One of the essential components for the initiation of protein synthesis. Protects formylmethionyl-tRNA from spontaneous hydrolysis and promotes its binding to the 30S ribosomal subunits. Also involved in the hydrolysis of GTP during the formation of the 70S ribosomal complex. This chain is Translation initiation factor IF-2, found in Clavibacter michiganensis subsp. michiganensis (strain NCPPB 382).